Here is a 92-residue protein sequence, read N- to C-terminus: DNA-directed RNA polymerase subunit omega (92 aa).

This sequence belongs to the RNA polymerase subunit omega family. As to quaternary structure, the RNAP catalytic core consists of 2 alpha, 1 beta, 1 beta' and 1 omega subunit. When a sigma factor is associated with the core the holoenzyme is formed, which can initiate transcription.

The catalysed reaction is RNA(n) + a ribonucleoside 5'-triphosphate = RNA(n+1) + diphosphate. Its function is as follows. Promotes RNA polymerase assembly. Latches the N- and C-terminal regions of the beta' subunit thereby facilitating its interaction with the beta and alpha subunits. This chain is DNA-directed RNA polymerase subunit omega, found in Shewanella amazonensis (strain ATCC BAA-1098 / SB2B).